Reading from the N-terminus, the 358-residue chain is MQLPVMPPVSPMLAKSVTAIPPDASYEPKWDGFRSICFRDGDQVELGSRNERPMTRYFPELVAAIRAELPHRCVIDGEIIIATDHGLDFEALQQRIHPAESRVRMLADRTPASFIAFDLLALGDDDYTGRPFSERRAALVDAVTGSGADADLSIHVTPATTDMATAQRWFSEFEGAGLDGVIAKPPHITYQPDKRVMFKIKHLRTADCVVAGYRVHKSGSDAIGSLLLGLYQEDGQLASVGVIGAFPMAERRRLLTELQPLVTSFDDHPWNWAAHVAGQRTPRKNEFSRWNVGKDLSFVPLRPERVVEVRYDRMEGARFRHTAQFNRWRPDRDPRSCSYAQLERPLTVSLSDIVPGLR.

Lys-29 functions as the N6-AMP-lysine intermediate in the catalytic mechanism.

This sequence belongs to the ATP-dependent DNA ligase family. A divalent metal cation is required as a cofactor.

The enzyme catalyses ATP + (deoxyribonucleotide)n-3'-hydroxyl + 5'-phospho-(deoxyribonucleotide)m = (deoxyribonucleotide)n+m + AMP + diphosphate.. Its function is as follows. DNA ligase that seals nicks in double-stranded DNA during DNA replication, DNA recombination and DNA repair. This Mycobacterium tuberculosis (strain ATCC 25618 / H37Rv) protein is DNA ligase C (ligC).